A 1225-amino-acid chain; its full sequence is uncharacterized protein (1225 aa).

Residues 1-15 (MSSQAEPSKGASNAD) are compositionally biased toward polar residues. Positions 1 to 104 (MSSQAEPSKG…VDGVPTRPVS (104 aa)) are disordered. Basic and acidic residues predominate over residues 16–25 (PNEKVEKMHL). A compositionally biased stretch (polar residues) spans 43–65 (ASPSDKNNLNPQSAGVSEVQVQD). The helical transmembrane segment at 167–187 (FLFGYLRFGFLSLFIIMAVCI) threads the bilayer. One can recognise an SMP-LTD domain in the interval 217 to 422 (DSETVTWLNT…SPNVYELDIE (206 aa)). 3 consecutive C2 domains span residues 413-534 (SPNV…NDAF), 559-668 (DSGE…LLWF), and 685-803 (KPAQ…GALM). Phosphoserine is present on S843. Positions 867 to 890 (PESQKTPTAVDNTSTSRGSTSVKT) are disordered. Residues 869 to 890 (SQKTPTAVDNTSTSRGSTSVKT) show a composition bias toward polar residues. The C2 4 domain maps to 1019 to 1137 (RLTPVPVKLE…QQQQQTNYEI (119 aa)). Ca(2+)-binding residues include D1053, D1059, D1107, D1109, and D1115.

It depends on Ca(2+) as a cofactor.

The protein localises to the endoplasmic reticulum membrane. This is an uncharacterized protein from Schizosaccharomyces pombe (strain 972 / ATCC 24843) (Fission yeast).